We begin with the raw amino-acid sequence, 1059 residues long: MEANPAGSGAGGGGSSGIGGEDGVHFQSYPFDFLEFLNHQRFEPMELYGEHAKAVAALPCAPGPPPQPPPQPPPPQYDYPPQSTFKPKAEVPSSSSSSSSSSSSSSSSSSSSSSSSSQAKKPDPPLPPAFGAPPPPLFDAAFPTPQWGIVDLSGHQHLFGNLKRGGPASGPGVTPGLGAPAGAPGPLPAPSQTPPGPPAAAACDPTKDDKGYFRRLKYLMERRFPCGVCQKSFKQSSHLVQHMLVHSGERPYECGVCGRTYNHVSSLIRHRRCHKDVPPAAGGPPQPGPHLPPLGLPAPAASAATAAAPSTVSSGPPATPVAPAPSADGSAAPAGVGVPPPATGGGDGPFACPLCWKVFKKPSHLHQHQIIHTGEKPFSCSVCSKSFNRRESLKRHVKTHSADLLRLPCGICGKAFRDASYLLKHQAAHAGAGAGGPRPVYPCDLCGKSYSAPQSLLRHKAAHAPPAAAAEAPKDGAASAPQPPPTFPPGPYLLPPDPPTTDSEKAAAAAAAVVYGAVPVPLLGAHPLLLGGAGTSGAGGSGASVPGKTFCCGICGRGFGRRETLKRHERIHTGEKPHQCPVCGKRFRESFHLSKHHVVHTRERPYKCELCGKVFGYPQSLTRHRQVHRLQLPCALAGAAGLPSTQGTPGACGPGASGTSAGPTDGLSYACSDCGEHFPDLFHVMSHKEVHMAEKPYGCDACGKTFGFIENLMWHKLVHQAAPERLLPPAPGGLQPPDGSSGTDAASVLDNGLAGEVGAAVAALAGVSGGEDAGGAAVAGAGGGASSGPERFSCATCGQSFKHFLGLVTHKYVHLVRRTLGCGLCGQSFAGAYDLLLHRRSHRQKRGFRCPVCGKRFWEAALLMRHQRCHTEQRPYRCGVCGRGFLRSWYLRQHRVVHTGERAFKCGVCAKRFAQSSSLAEHRRLHAVARPQRCSACGKTFRYRSNLLEHQRLHLGERAYRCEHCGKGFFYLSSVLRHQRAHEPPRPELRCPACLKAFKDPGYFRKHLAAHQGGRPFRCSSCGEGFANTYGLKKHRLAHKAENLGGPGAGAGTLAGKDA.

3 disordered regions span residues 1 to 24, 58 to 142, and 161 to 206; these read MEANPAGSGAGGGGSSGIGGEDGV, LPCA…DAAF, and NLKR…CDPT. Gly residues predominate over residues 8-21; the sequence is SGAGGGGSSGIGGE. The segment covering 61–78 has biased composition (pro residues); it reads APGPPPQPPPQPPPPQYD. The span at 93–119 shows a compositional bias: low complexity; it reads SSSSSSSSSSSSSSSSSSSSSSSSSQA. 2 stretches are compositionally biased toward pro residues: residues 124–137 and 183–198; these read PPLPPAFGAPPPPL and APGPLPAPSQTPPGPP. 2 consecutive C2H2-type zinc fingers follow at residues 224–246 and 252–274; these read FPCGVCQKSFKQSSHLVQHMLVH and YECGVCGRTYNHVSSLIRHRRCH. The disordered stretch occupies residues 275-342; the sequence is KDVPPAAGGP…PAGVGVPPPA (68 aa). The segment covering 281-296 has biased composition (pro residues); the sequence is AGGPPQPGPHLPPLGL. Low complexity-rich tracts occupy residues 297–316 and 324–337; these read PAPAASAATAAAPSTVSSGP and APSADGSAAPAGVG. C2H2-type zinc fingers lie at residues 350–372, 378–400, 407–429, and 441–463; these read FACPLCWKVFKKPSHLHQHQIIH, FSCSVCSKSFNRRESLKRHVKTH, LPCGICGKAFRDASYLLKHQAAH, and YPCDLCGKSYSAPQSLLRHKAAH. Residues 461-503 are disordered; that stretch reads AAHAPPAAAAEAPKDGAASAPQPPPTFPPGPYLLPPDPPTTDS. Residues 463-480 show a composition bias toward low complexity; it reads HAPPAAAAEAPKDGAASA. Pro residues predominate over residues 481–499; the sequence is PQPPPTFPPGPYLLPPDPP. 5 consecutive C2H2-type zinc fingers follow at residues 550 to 572, 578 to 600, 606 to 628, 669 to 691, and 697 to 719; these read FCCGICGRGFGRRETLKRHERIH, HQCPVCGKRFRESFHLSKHHVVH, YKCELCGKVFGYPQSLTRHRQVH, YACSDCGEHFPDLFHVMSHKEVH, and YGCDACGKTFGFIENLMWHKLVH. A disordered region spans residues 726–747; sequence LLPPAPGGLQPPDGSSGTDAAS. 9 consecutive C2H2-type zinc fingers follow at residues 792-814, 820-842, 848-870, 876-898, 904-926, 932-954, 960-982, 989-1011, and 1017-1039; these read FSCATCGQSFKHFLGLVTHKYVH, LGCGLCGQSFAGAYDLLLHRRSH, FRCPVCGKRFWEAALLMRHQRCH, YRCGVCGRGFLRSWYLRQHRVVH, FKCGVCAKRFAQSSSLAEHRRLH, QRCSACGKTFRYRSNLLEHQRLH, YRCEHCGKGFFYLSSVLRHQRAH, LRCPACLKAFKDPGYFRKHLAAH, and FRCSSCGEGFANTYGLKKHRLAH. Lys802 is covalently cross-linked (Glycyl lysine isopeptide (Lys-Gly) (interchain with G-Cter in SUMO2)). Lys1040 participates in a covalent cross-link: Glycyl lysine isopeptide (Lys-Gly) (interchain with G-Cter in SUMO2).

Belongs to the krueppel C2H2-type zinc-finger protein family.

Its subcellular location is the nucleus. In terms of biological role, may be involved in transcriptional regulation. In Homo sapiens (Human), this protein is Zinc finger protein 865 (ZNF865).